The following is a 779-amino-acid chain: Transcription activator of gluconeogenesis BDCG_02812 (779 aa).

The tract at residues 1-70 (MTASTRNGSP…NAKDPLRPRR (70 aa)) is disordered. Positions 25-61 (KSMTTTPANPPETKSQTNGKGSGTAQSSQKPASTSAN) are enriched in polar residues. Positions 77 to 105 (CFACQRAHLTCGDERPCQRCIKRGLQDAC) form a DNA-binding region, zn(2)-C6 fungal-type. 6 disordered regions span residues 135 to 163 (QANTTRNIPNQRGNASNSNSNKVSRQSVS), 202 to 239 (SVFHAQSPSSTQNFDLSSNPQTQNLSSAMSQTASSVSG), 285 to 344 (GAGD…ANPR), 401 to 421 (TNLMHPTNTPQQSRISTPGLK), 559 to 590 (GSSLSSASSVRGSSTFTPRNNNTHNSIDPHTG), and 655 to 732 (FHGK…QTWG). Polar residues predominate over residues 202 to 226 (SVFHAQSPSSTQNFDLSSNPQTQNL). A compositionally biased stretch (low complexity) spans 227 to 238 (SSAMSQTASSVS). Composition is skewed to polar residues over residues 291-322 (PSDSATQRGSIGRSSGTFTAQNFGDSANNQSP), 333-344 (WNPTGQGQANPR), and 401-416 (TNLMHPTNTPQQSRIS). Low complexity predominate over residues 560-572 (SSLSSASSVRGSS). Positions 573–586 (TFTPRNNNTHNSID) are enriched in polar residues. Over residues 672–719 (TGTTTSGDVATTTATGTSTSNGANANTNGNNTNPNDPSSAASSSASSA) the composition is skewed to low complexity. Residues 720 to 729 (LQGPQQSPRQ) show a composition bias toward polar residues.

Belongs to the ERT1/acuK family.

The protein resides in the nucleus. Functionally, transcription factor which regulates nonfermentable carbon utilization. Activator of gluconeogenetic genes. This is Transcription activator of gluconeogenesis BDCG_02812 from Ajellomyces dermatitidis (strain ER-3 / ATCC MYA-2586) (Blastomyces dermatitidis).